The primary structure comprises 968 residues: Isoleucine--tRNA ligase (968 aa).

A 'HIGH' region motif is present at residues 68 to 78 (PYANGALHMGH). Glu-582 provides a ligand contact to L-isoleucyl-5'-AMP. The 'KMSKS' region motif lies at 623 to 627 (KMSKS). Lys-626 contacts ATP. Zn(2+) is bound by residues Cys-936, Cys-939, Cys-956, and Cys-959.

This sequence belongs to the class-I aminoacyl-tRNA synthetase family. IleS type 1 subfamily. Monomer. Zn(2+) serves as cofactor.

Its subcellular location is the cytoplasm. It catalyses the reaction tRNA(Ile) + L-isoleucine + ATP = L-isoleucyl-tRNA(Ile) + AMP + diphosphate. Its function is as follows. Catalyzes the attachment of isoleucine to tRNA(Ile). As IleRS can inadvertently accommodate and process structurally similar amino acids such as valine, to avoid such errors it has two additional distinct tRNA(Ile)-dependent editing activities. One activity is designated as 'pretransfer' editing and involves the hydrolysis of activated Val-AMP. The other activity is designated 'posttransfer' editing and involves deacylation of mischarged Val-tRNA(Ile). The chain is Isoleucine--tRNA ligase from Prochlorococcus marinus (strain MIT 9312).